The sequence spans 137 residues: ATP synthase epsilon chain, chloroplastic (137 aa).

It belongs to the ATPase epsilon chain family. In terms of assembly, F-type ATPases have 2 components, CF(1) - the catalytic core - and CF(0) - the membrane proton channel. CF(1) has five subunits: alpha(3), beta(3), gamma(1), delta(1), epsilon(1). CF(0) has three main subunits: a, b and c.

It is found in the plastid. The protein localises to the chloroplast thylakoid membrane. Its function is as follows. Produces ATP from ADP in the presence of a proton gradient across the membrane. This chain is ATP synthase epsilon chain, chloroplastic, found in Pisum sativum (Garden pea).